Reading from the N-terminus, the 2568-residue chain is Highly reducing polyketide synthase resH (2568 aa).

Positions 9–437 (PEPIAIVGMA…GANAHAILDA (429 aa)) constitute a Ketosynthase family 3 (KS3) domain. Catalysis depends on for beta-ketoacyl synthase activity residues Cys-184, His-319, and His-359. A Malonyl-CoA:ACP transacylase (MAT) domain is found at 549–877 (FIFTGQGAQW…KLAGSLFLSG (329 aa)). The interval 942-1081 (HDLLGSRLPG…TNDQLLWPDD (140 aa)) is N-terminal hotdog fold. One can recognise a PKS/mFAS DH domain in the interval 942–1244 (HDLLGSRLPG…FSSLETASSD (303 aa)). His-974 serves as the catalytic Proton acceptor; for dehydratase activity. Positions 1091-1244 (NKDSYDRRWY…FSSLETASSD (154 aa)) are C-terminal hotdog fold. The Proton donor; for dehydratase activity role is filled by Asp-1156. Residues 1295–1595 (VTRLAIRSSA…SGADVVLDDY (301 aa)) form a methyltransferase (CMet) domain region. The 302-residue stretch at 1853–2154 (GRLDSFYFKE…QEDSVGLAVL (302 aa)) folds into the Enoyl reductase (ER) domain. A Ketoreductase (KR) domain is found at 2177–2357 (ASYLLIGCLG…QATSIALGMI (181 aa)). Residues 2485-2563 (AVKSAILGLI…GLADQVVSLA (79 aa)) form the Carrier domain. Residue Ser-2522 is modified to O-(pantetheine 4'-phosphoryl)serine.

Pantetheine 4'-phosphate is required as a cofactor.

Its pathway is antifungal biosynthesis. Functionally, highly reducing polyketide synthase; part of the gene cluster that mediates the biosynthesis of the tetrahydropyranyl antifungal agent restricticin that acts as an inhibitor of CYP51 and blocks the ergosterol biosynthesis. The highly reducing polyketide synthase resH, the short chain dehydrogenase resG, the cyclase resF, the FAD-dependent monooxygenase resA and the enoylreductase resD are required to generate the first stable intermediate desmethylrestrictinol. ResH with resD biosynthesize the first polyketide chain intermediate that is reduced by resG, followed by epoxidation by resA before 6-endo cyclization via epoxide opening by resF leads to desmethylrestrictinol. The methyltransferase resE then catalyzes the C4 O-methylation of desmethylrestrictinol to produce restrictinol, and the nonribosomal peptide synthetase resC catalyzes the C3 esterification of restrictinol with glycine that leads to restricticin. The chain is Highly reducing polyketide synthase resH from Aspergillus sclerotiorum.